The primary structure comprises 484 residues: Trigger factor (484 aa).

The 82-residue stretch at Gly162–Pro243 folds into the PPIase FKBP-type domain. Positions Asp427–Gly484 are disordered. The span at Asp444–Ser476 shows a compositional bias: acidic residues.

This sequence belongs to the FKBP-type PPIase family. Tig subfamily.

The protein resides in the cytoplasm. It catalyses the reaction [protein]-peptidylproline (omega=180) = [protein]-peptidylproline (omega=0). Functionally, involved in protein export. Acts as a chaperone by maintaining the newly synthesized protein in an open conformation. Functions as a peptidyl-prolyl cis-trans isomerase. The chain is Trigger factor from Mycobacterium ulcerans (strain Agy99).